The primary structure comprises 63 residues: Large ribosomal subunit protein bL28 (63 aa).

It belongs to the bacterial ribosomal protein bL28 family.

This is Large ribosomal subunit protein bL28 from Solibacter usitatus (strain Ellin6076).